The sequence spans 433 residues: Zinc finger and SCAN domain-containing protein 4 (433 aa).

An SCAN box domain is found at 44-126 (RMVLNSFQDS…RFIEDLTDDS (83 aa)). 3 stretches are compositionally biased toward polar residues: residues 165–185 (TTREANMGTPSQTSQDTSLET), 195–210 (GWNSSSKTTRVNENIT), and 277–299 (QPEQSSPESALTHQSNEGNSTCE). 2 disordered regions span residues 165–210 (TTRE…ENIT) and 275–301 (ISQPEQSSPESALTHQSNEGNSTCEVH). C2H2-type zinc fingers lie at residues 312 to 334 (YKCEECPKVFKYLCHLLAHQRRH), 340 to 362 (FVCPECQKGFFQISDLRVHQIIH), 368 to 390 (FTCSMCKKSFSHKTNLRSHERIH), and 396 to 418 (YTCPFCKTSYRQSSTYHRHMRTH).

The protein resides in the nucleus. Its subcellular location is the chromosome. It is found in the telomere. Embryonic stem (ES) cell-specific transcription factor required to regulate ES cell pluripotency. Binds telomeres and plays a key role in genomic stability in ES cells by regulating telomere elongation. Acts as an activator of spontaneous telomere sister chromatid exchange (T-SCE) and telomere elongation in undifferentiated ES cells. This chain is Zinc finger and SCAN domain-containing protein 4 (ZSCAN4), found in Homo sapiens (Human).